We begin with the raw amino-acid sequence, 253 residues long: Flap endonuclease Xni (253 aa).

Asp-104 contributes to the Mg(2+) binding site. The 5'-3' exonuclease domain maps to 160 to 250; that stretch reads VAPQQLTDFW…HGNLQQLRLN (91 aa). Residues Leu-171, Ala-172, Pro-180, Ile-182, and Ile-185 each coordinate K(+). An interaction with DNA region spans residues 184-189; it reads GIGAKT.

Belongs to the Xni family. Mg(2+) serves as cofactor. Requires K(+) as cofactor.

Has flap endonuclease activity. During DNA replication, flap endonucleases cleave the 5'-overhanging flap structure that is generated by displacement synthesis when DNA polymerase encounters the 5'-end of a downstream Okazaki fragment. This is Flap endonuclease Xni from Edwardsiella ictaluri (strain 93-146).